Reading from the N-terminus, the 324-residue chain is Tubulin alpha-8 chain (324 aa).

GTP contacts are provided by serine 15, glycine 19, threonine 20, threonine 54, asparagine 81, and asparagine 103. The active site involves glutamate 129.

The protein belongs to the tubulin family. As to quaternary structure, dimer of alpha and beta chains. A typical microtubule is a hollow water-filled tube with an outer diameter of 25 nm and an inner diameter of 15 nM. Alpha-beta heterodimers associate head-to-tail to form protofilaments running lengthwise along the microtubule wall with the beta-tubulin subunit facing the microtubule plus end conferring a structural polarity. Microtubules usually have 13 protofilaments but different protofilament numbers can be found in some organisms and specialized cells. Mg(2+) is required as a cofactor. Post-translationally, some glutamate residues at the C-terminus are polyglycylated, resulting in polyglycine chains on the gamma-carboxyl group. Glycylation is mainly limited to tubulin incorporated into axonemes (cilia and flagella) whereas glutamylation is prevalent in neuronal cells, centrioles, axonemes, and the mitotic spindle. Both modifications can coexist on the same protein on adjacent residues, and lowering polyglycylation levels increases polyglutamylation, and reciprocally. The precise function of polyglycylation is still unclear. In terms of processing, some glutamate residues at the C-terminus are polyglutamylated, resulting in polyglutamate chains on the gamma-carboxyl group. Polyglutamylation plays a key role in microtubule severing by spastin (SPAST). SPAST preferentially recognizes and acts on microtubules decorated with short polyglutamate tails: severing activity by SPAST increases as the number of glutamates per tubulin rises from one to eight, but decreases beyond this glutamylation threshold.

The protein resides in the cytoplasm. The protein localises to the cytoskeleton. The catalysed reaction is GTP + H2O = GDP + phosphate + H(+). Functionally, tubulin is the major constituent of microtubules, a cylinder consisting of laterally associated linear protofilaments composed of alpha- and beta-tubulin heterodimers. Microtubules grow by the addition of GTP-tubulin dimers to the microtubule end, where a stabilizing cap forms. Below the cap, tubulin dimers are in GDP-bound state, owing to GTPase activity of alpha-tubulin. In Gallus gallus (Chicken), this protein is Tubulin alpha-8 chain.